A 255-amino-acid polypeptide reads, in one-letter code: Large ribosomal subunit protein uL4 (255 aa).

Belongs to the universal ribosomal protein uL4 family. Part of the 50S ribosomal subunit.

Its function is as follows. One of the primary rRNA binding proteins, this protein initially binds near the 5'-end of the 23S rRNA. It is important during the early stages of 50S assembly. It makes multiple contacts with different domains of the 23S rRNA in the assembled 50S subunit and ribosome. In terms of biological role, forms part of the polypeptide exit tunnel. This Pyrococcus furiosus (strain ATCC 43587 / DSM 3638 / JCM 8422 / Vc1) protein is Large ribosomal subunit protein uL4.